Reading from the N-terminus, the 289-residue chain is Probable porphobilinogen deaminase (289 aa).

C233 is modified (S-(dipyrrolylmethanemethyl)cysteine).

This sequence belongs to the HMBS family. It depends on dipyrromethane as a cofactor.

The enzyme catalyses 4 porphobilinogen + H2O = hydroxymethylbilane + 4 NH4(+). It functions in the pathway porphyrin-containing compound metabolism; protoporphyrin-IX biosynthesis; coproporphyrinogen-III from 5-aminolevulinate: step 2/4. In terms of biological role, tetrapolymerization of the monopyrrole PBG into the hydroxymethylbilane pre-uroporphyrinogen in several discrete steps. The chain is Probable porphobilinogen deaminase (hemC) from Methanothermobacter thermautotrophicus (strain ATCC 29096 / DSM 1053 / JCM 10044 / NBRC 100330 / Delta H) (Methanobacterium thermoautotrophicum).